A 337-amino-acid polypeptide reads, in one-letter code: Basic membrane protein A1 (337 aa).

The signal sequence occupies residues M1–S17. C18 is lipidated: N-palmitoyl cysteine. C18 carries the S-diacylglycerol cysteine lipid modification.

This sequence belongs to the BMP lipoprotein family. As to quaternary structure, monomer.

The protein resides in the cell inner membrane. Its function is as follows. Immunogenic protein. May be part of an ABC-type nucleoside uptake system involved in the purine salvage pathway. This Borrelia garinii subsp. bavariensis (strain ATCC BAA-2496 / DSM 23469 / PBi) (Borreliella bavariensis) protein is Basic membrane protein A1 (bmpA1).